We begin with the raw amino-acid sequence, 249 residues long: Phosphoserine phosphatase (249 aa).

Belongs to the HAD-like hydrolase superfamily. Homodimer. Mg(2+) is required as a cofactor. Requires Co(2+) as cofactor.

It catalyses the reaction O-phospho-L-serine + H2O = L-serine + phosphate. The catalysed reaction is O-phospho-D-serine + H2O = D-serine + phosphate. It functions in the pathway amino-acid biosynthesis; L-serine biosynthesis; L-serine from 3-phospho-D-glycerate: step 3/3. In terms of biological role, catalyzes the last step of the phosphorylated serine biosynthetic pathway, i.e. dephosphorylation of O-phospho-L-serine to form L-serine. Is also able to dephosphorylate O-phospho-D-serine with similar efficiency. Displays a poor activity on L-phosphothreonine, and cannot use L-phosphotyrosine, pyridoxal phosphate, glucose 6-phosphate, or fructose 6-phosphate as substrates. The protein is Phosphoserine phosphatase of Thermus thermophilus (strain ATCC BAA-163 / DSM 7039 / HB27).